A 534-amino-acid chain; its full sequence is Solute carrier family 22 member 15 (534 aa).

The helical transmembrane segment at 22–42 threads the bilayer; sequence FLLAVLLQLYSATEAIIITIL. 3 N-linked (GlcNAc...) asparagine glycosylation sites follow: Asn52, Asn58, and Asn83. 11 helical membrane-spanning segments follow: residues 97-117, 136-156, 161-181, 191-211, 216-236, 297-317, 327-347, 356-376, 391-411, 424-444, and 450-470; these read AAYE…IGVI, LALE…PLFL, LVGV…NECI, SLGS…GYFI, LLAL…LCIP, TLIM…LTLS, LNLA…MYLI, GSLA…MLVP, TLSL…YIYS, MGVC…IPAL, and ALPF…SLLL. N-linked (GlcNAc...) asparagine glycosylation occurs at Asn513.

This sequence belongs to the major facilitator (TC 2.A.1) superfamily. Organic cation transporter (TC 2.A.1.19) family.

The protein localises to the membrane. Probably transports organic cations. The protein is Solute carrier family 22 member 15 (slc22a15) of Xenopus tropicalis (Western clawed frog).